Reading from the N-terminus, the 201-residue chain is Endoribonuclease YbeY (201 aa).

Zn(2+) is bound by residues His-120, His-124, and His-130. The disordered stretch occupies residues 151–201; it reads DGADGADGADGARGAADGAADGGEGRRGDQGRRGDQGRGGGAGEPPAAPAR. A compositionally biased stretch (basic and acidic residues) spans 173–186; it reads GEGRRGDQGRRGDQ.

The protein belongs to the endoribonuclease YbeY family. Zn(2+) is required as a cofactor.

It localises to the cytoplasm. Functionally, single strand-specific metallo-endoribonuclease involved in late-stage 70S ribosome quality control and in maturation of the 3' terminus of the 16S rRNA. This chain is Endoribonuclease YbeY, found in Frankia casuarinae (strain DSM 45818 / CECT 9043 / HFP020203 / CcI3).